Here is a 397-residue protein sequence, read N- to C-terminus: MWWFGGNPSPSDYPNAAIPNFNMHAFVIFSVFLIPLIAYILILPGVRRKRVVTTVTYVLMLAVGGALIASLIYPCWASGSQMIYTQFRGHSNERILAKIGVEIGLQKVNVTLKFERLLSSNDVLPGSDMTELYYNEGFDISGISSMAEALHHGLENGLPYPMLSVLEYFSLNQDSFDWGRHYRVAGHYTHAAIWFAFACWCLSVVLMLFLPHNAYKSILATGISCLIACLVYLLLSPCELRIAFTGENFERVDLTATFSFCFYLIFAIGILCVLCGLGLGICEHWRIYTLSTFLDASLDEHVGPKWKKLPTGGPALQGVQIGAYGTNTTNSSRDKNDISSDKTAGSSGFQSRTSTCQSSASSASLRSQSSIETVHDEAELERTHVHFLQEPCSSSST.

A run of 2 helical transmembrane segments spans residues 26-46 and 57-77; these read FVIFSVFLIPLIAYILILPGV and YVLMLAVGGALIASLIYPCWA. A glycan (N-linked (GlcNAc...) asparagine) is linked at Asn109. Transmembrane regions (helical) follow at residues 191–211, 218–238, and 261–281; these read AAIWFAFACWCLSVVLMLFLP, ILATGISCLIACLVYLLLSPC, and CFYLIFAIGILCVLCGLGLGI. Residues 324 to 376 form a disordered region; that stretch reads YGTNTTNSSRDKNDISSDKTAGSSGFQSRTSTCQSSASSASLRSQSSIETVHD. N-linked (GlcNAc...) asparagine glycans are attached at residues Asn327 and Asn330. The span at 341-350 shows a compositional bias: polar residues; it reads DKTAGSSGFQ. Positions 351–370 are enriched in low complexity; it reads SRTSTCQSSASSASLRSQSS.

This sequence belongs to the DUOXA family. As to quaternary structure, interacts with bli-3 and tsp-15. Interacts with csnk-1. As to expression, expressed in the hypodermis, specifically in seam cells, the terminal bulb of the pharynx, the distal region of the gonadal arm, vulva, spermatheca and uterus.

It localises to the membrane. Functionally, plays a role in cuticle biogenesis. In complex with tsp-15 and the dual oxidase bli-3, promotes the generation of reactive oxygen species (ROS) and tyrosine cross-linking of collagen, thus stabilizing cuticular extracellular matrix. This is Dual oxidase maturation factor 1 from Caenorhabditis elegans.